The following is a 1595-amino-acid chain: MGVPTKISILGRESIVADFGIWRNYVAKDLLSSCSSSTYILISDTNLTPLYLEGFQRSFEDAATNVSPKPRLLTYEIPPGESSKSRETKADIEDWMLARQPPCGRDTVIIALGGGVIGDLIGFVAATYMRGVRFVQVPTTLLAMVDSSIGGKTAIDTPNGKNLIGAIWQPQRIYLDMEFLNTLPEREFINGMAEVIKTAAISSEEKFAALERDAETILAAVKSKNTPERPRFSGIEETLKRTILSSAEFKAQVVTADEREGGLRNLLNFGHSIGHSIEAILAPQVLHGECVSIGMVKEAELARHLGILNNVSVSRISKCLASYGLPTSLKDQRIKKLTAGKHCSVEQLIAYMGVDKKNDGPKKKVVLLSAIGRTHEPRASTVSNEEIQIVLAPSIEVSPGVPKGLDVTCTPPGSKSISNRALVLAALGSGTCRLKNLLHSDDTEVMLNALERLGAATFSWEDEGEVLVVSGKGGRMEASPSELYLGNAGTASRFLTTVATLARKSSVDSSVLTGNARMKQRPIGDLVDALAANGASIEYLENLGCLPLKIAASGGFAGGEINLAAKVSSQYVSSLLMCAPYAKTPVTLRLMGGKPISQSYIDMTTAMMRSFGVEVKKSETEEHTYHIPLGFYTNPVEYIVESDASSATYPLAAAAITGTSCTVPNIGSKSLQGDARFAVDVLRPMGCAVDQSDFSTRVTGPPGGILSPLPNIDMEPMTDAFLTASVLASVARGKGSNHTTRIFGIANQRVKECNRIKAMKDELAQFGVVCREHDDGLEIDGIDRATLHHPSDGVYCYDDHRVAMSFSVLSLVTPEPTLILEKECVGKTWPGWWDSLAQTFKVKLDGKEVGKRIETNPIVHVNKSAASIFIIGMRGAGKTTSGFWVSKALQRPFIDLDDELERTEGMTIPEIIKQRGWGGFREAELSLLRRVMTEKPTGYIFACGGGVVETPEARKLLTQYHKTTGNVILVMRDIKEIMDFLKIDKTRPAYVEDMMSVWLRRKPWYEECSNVQYYSRLTGLDGMTQVSGGFNRFLKVITGEVDSLAKMRRKENTFFVSLTLPDLGLAAHILKEVTLGSDAVELRVDLLKDPQSDNEIPSVDYVAEQISVLRSRASVPLVFTIRTKGQGGRFPDDAYDAALQLYRLAVRMGSEFVDLEISFPEQLLRTVTEMKGFSKIIASHHDPKGQLSWVNGSWIQFYNKALQYGDVIKLVGVARSIDDNISLKKFKTWAEEKHNVPIIAINMGDKGQLSRMLNGFMTPVSHPSLPFKAAPGQLSAREIRKGLSLIGEIKAKKFAVIGNPVSASRSPAMHNTLFRQMGLPHTYGTLETDNPEVAKEFIRSPDFGGASVTIPLKLSIMPLLDEIAPEAMSIGAVNTIVCAPPAPDGKSQTPRLIGHNTDWQGMVRCLSDAGAYAAATPTTASAGLVIGGGGTARAAIFALQNMGYSPIYVLGRSPDKLSSMTSTFHTDHDIRILEDLKALESLPTVAIGTIPGDKPIEPHMREILCRLFDLCEKANSDTEQARGVSTKRILLEMAYKPSVTSLMQLASDSGWTVLPGLEALVAQGVYQCEYWTNITPVYEYARNAVMGVLPSEDIS.

A 3-dehydroquinate synthase region spans residues 1 to 384; sequence MGVPTKISIL…HEPRASTVSN (384 aa). Residues 44–46, 81–84, 114–116, and Asp119 each bind NAD(+); these read DTN, ESSK, and GGV. Residue Arg130 coordinates 7-phospho-2-dehydro-3-deoxy-D-arabino-heptonate. 139–140 serves as a coordination point for NAD(+); it reads TT. 7-phospho-2-dehydro-3-deoxy-D-arabino-heptonate is bound by residues Asp146 and Lys152. Lys161 lines the NAD(+) pocket. Residue Asn162 participates in 7-phospho-2-dehydro-3-deoxy-D-arabino-heptonate binding. Residues 179 to 182 and Asn190 contribute to the NAD(+) site; that span reads FLNT. Glu194 lines the Zn(2+) pocket. 7-phospho-2-dehydro-3-deoxy-D-arabino-heptonate is bound by residues 194-197 and Lys250; that span reads EVIK. Glu260 (proton acceptor; for 3-dehydroquinate synthase activity) is an active-site residue. 7-phospho-2-dehydro-3-deoxy-D-arabino-heptonate-binding positions include 264 to 268 and His271; that span reads RNLLN. His271 is a Zn(2+) binding site. His275 acts as the Proton acceptor; for 3-dehydroquinate synthase activity in catalysis. His287 and Lys356 together coordinate 7-phospho-2-dehydro-3-deoxy-D-arabino-heptonate. Residue His287 coordinates Zn(2+). The segment at 397–842 is EPSP synthase; the sequence is VSPGVPKGLD…WDSLAQTFKV (446 aa). The active-site For EPSP synthase activity is Cys824. The tract at residues 866 to 1057 is shikimate kinase; it reads ASIFIIGMRG…RRKENTFFVS (192 aa). 872 to 879 contacts ATP; that stretch reads GMRGAGKT. The segment at 1058–1278 is 3-dehydroquinase; sequence LTLPDLGLAA…AAPGQLSARE (221 aa). The Proton acceptor; for 3-dehydroquinate dehydratase activity role is filled by His1181. Lys1209 (schiff-base intermediate with substrate; for 3-dehydroquinate dehydratase activity) is an active-site residue. The segment at 1291–1595 is shikimate dehydrogenase; that stretch reads AKKFAVIGNP…MGVLPSEDIS (305 aa).

This sequence in the N-terminal section; belongs to the sugar phosphate cyclases superfamily. Dehydroquinate synthase family. In the 2nd section; belongs to the EPSP synthase family. The protein in the 3rd section; belongs to the shikimate kinase family. It in the 4th section; belongs to the type-I 3-dehydroquinase family. This sequence in the C-terminal section; belongs to the shikimate dehydrogenase family. In terms of assembly, homodimer. Requires Zn(2+) as cofactor.

It is found in the cytoplasm. It catalyses the reaction 7-phospho-2-dehydro-3-deoxy-D-arabino-heptonate = 3-dehydroquinate + phosphate. The enzyme catalyses 3-dehydroquinate = 3-dehydroshikimate + H2O. The catalysed reaction is shikimate + NADP(+) = 3-dehydroshikimate + NADPH + H(+). It carries out the reaction shikimate + ATP = 3-phosphoshikimate + ADP + H(+). It catalyses the reaction 3-phosphoshikimate + phosphoenolpyruvate = 5-O-(1-carboxyvinyl)-3-phosphoshikimate + phosphate. The protein operates within metabolic intermediate biosynthesis; chorismate biosynthesis; chorismate from D-erythrose 4-phosphate and phosphoenolpyruvate: step 2/7. It participates in metabolic intermediate biosynthesis; chorismate biosynthesis; chorismate from D-erythrose 4-phosphate and phosphoenolpyruvate: step 3/7. Its pathway is metabolic intermediate biosynthesis; chorismate biosynthesis; chorismate from D-erythrose 4-phosphate and phosphoenolpyruvate: step 4/7. It functions in the pathway metabolic intermediate biosynthesis; chorismate biosynthesis; chorismate from D-erythrose 4-phosphate and phosphoenolpyruvate: step 5/7. The protein operates within metabolic intermediate biosynthesis; chorismate biosynthesis; chorismate from D-erythrose 4-phosphate and phosphoenolpyruvate: step 6/7. Its function is as follows. The AROM polypeptide catalyzes 5 consecutive enzymatic reactions in prechorismate polyaromatic amino acid biosynthesis. The sequence is that of Pentafunctional AROM polypeptide from Ajellomyces capsulatus (strain H143) (Darling's disease fungus).